Reading from the N-terminus, the 177-residue chain is Large ribosomal subunit protein uL6 (177 aa).

Belongs to the universal ribosomal protein uL6 family. As to quaternary structure, part of the 50S ribosomal subunit.

This protein binds to the 23S rRNA, and is important in its secondary structure. It is located near the subunit interface in the base of the L7/L12 stalk, and near the tRNA binding site of the peptidyltransferase center. The polypeptide is Large ribosomal subunit protein uL6 (Neisseria meningitidis serogroup B (strain ATCC BAA-335 / MC58)).